A 100-amino-acid polypeptide reads, in one-letter code: Small ribosomal subunit protein uS14c (100 aa).

Belongs to the universal ribosomal protein uS14 family. As to quaternary structure, part of the 30S ribosomal subunit.

It localises to the plastid. The protein resides in the chloroplast. Its function is as follows. Binds 16S rRNA, required for the assembly of 30S particles. This chain is Small ribosomal subunit protein uS14c, found in Porphyra purpurea (Red seaweed).